Here is a 202-residue protein sequence, read N- to C-terminus: GTP cyclohydrolase 1 (202 aa).

Residues Cys-93, His-96, and Cys-164 each coordinate Zn(2+).

The protein belongs to the GTP cyclohydrolase I family. In terms of assembly, toroid-shaped homodecamer, composed of two pentamers of five dimers.

It carries out the reaction GTP + H2O = 7,8-dihydroneopterin 3'-triphosphate + formate + H(+). The protein operates within cofactor biosynthesis; 7,8-dihydroneopterin triphosphate biosynthesis; 7,8-dihydroneopterin triphosphate from GTP: step 1/1. The sequence is that of GTP cyclohydrolase 1 from Pelagibacter ubique (strain HTCC1062).